The following is a 585-amino-acid chain: Glutamine--tRNA ligase (585 aa).

The 'HIGH' region motif lies at 51-61; it reads PEPNGYLHIGH. ATP contacts are provided by residues 52-54 and 58-64; these read EPN and HIGHAKS. L-glutamine contacts are provided by Asp-84 and Tyr-238. Residues Thr-257 and 292-293 contribute to the ATP site; that span reads RL. The 'KMSKS' region motif lies at 299 to 303; that stretch reads ITSKR.

Belongs to the class-I aminoacyl-tRNA synthetase family. As to quaternary structure, monomer.

The protein localises to the cytoplasm. It carries out the reaction tRNA(Gln) + L-glutamine + ATP = L-glutaminyl-tRNA(Gln) + AMP + diphosphate. The polypeptide is Glutamine--tRNA ligase (Cupriavidus taiwanensis (strain DSM 17343 / BCRC 17206 / CCUG 44338 / CIP 107171 / LMG 19424 / R1) (Ralstonia taiwanensis (strain LMG 19424))).